We begin with the raw amino-acid sequence, 758 residues long: General transcription and DNA repair factor IIH helicase subunit XPD (758 aa).

The 279-residue stretch at 7–285 folds into the Helicase ATP-binding domain; the sequence is DVTVYFPYDN…TDAGRLRAEY (279 aa). 42–49 is a binding site for ATP; it reads MPTGTGKT. Cysteine 116, cysteine 134, cysteine 155, and cysteine 190 together coordinate [4Fe-4S] cluster. Positions 234–238 match the DEAH box motif; the sequence is DEAHN.

It belongs to the helicase family. RAD3/XPD subfamily. Component of the 7-subunit TFIIH core complex composed of XPB, XPD, TFB1/GTF2H1, GTF2H2/P44, TFB4/GTF2H3, TFB2/GTF2H4 and TFB5/GTF2H5, which is active in NER. The core complex associates with the 3-subunit CDK-activating kinase (CAK) module composed of CYCH1/cyclin H1, CDKD and MAT1/At4g30820 to form the 10-subunit holoenzyme (holo-TFIIH) active in transcription. Interacts with GTF2H2/p44. It depends on [4Fe-4S] cluster as a cofactor. As to expression, expressed at low levels in all tissues.

It localises to the nucleus. The catalysed reaction is Couples ATP hydrolysis with the unwinding of duplex DNA at the replication fork by translocating in the 5'-3' direction. This creates two antiparallel DNA single strands (ssDNA). The leading ssDNA polymer is the template for DNA polymerase III holoenzyme which synthesizes a continuous strand.. The enzyme catalyses ATP + H2O = ADP + phosphate + H(+). ATP-dependent 5'-3' DNA helicase, component of the general transcription and DNA repair factor IIH (TFIIH) core complex, which is involved in general and transcription-coupled nucleotide excision repair (NER) of damaged DNA and, when complexed to CDK-activating kinase (CAK), involved in transcription by RNA polymerase II. In NER, TFIIH acts by opening DNA around the lesion to allow the excision of the damaged oligonucleotide and its replacement by a new DNA fragment. The ATP-dependent helicase activity of XPD is required for DNA opening. In transcription, TFIIH has an essential role in transcription initiation. When the pre-initiation complex (PIC) has been established, TFIIH is required for promoter opening and promoter escape. Phosphorylation of the C-terminal tail (CTD) of the largest subunit of RNA polymerase II by the kinase module CAK controls the initiation of transcription. XPD acts by forming a bridge between CAK and the core-TFIIH complex. Essential during plant growth. May negatively regulate a common response program mediated by UV damage and heat stress, that leads to tissue death and reduced chloroplast function. The protein is General transcription and DNA repair factor IIH helicase subunit XPD of Arabidopsis thaliana (Mouse-ear cress).